Reading from the N-terminus, the 416-residue chain is Protein LAZY 1 (416 aa).

A helical membrane pass occupies residues 63-83 (FTFGGSGLLTIGTLGIAAVAI). An IGT motif motif is present at residues 69–75 (GLLTIGT). 2 disordered regions span residues 266–306 (AAAA…GMPA) and 337–361 (KKSRNRGATDNGGGAVATGDPDGPL). The segment covering 270–282 (GVGGDRAGKGGGY) has biased composition (gly residues). The Nuclear localization signal signature appears at 278–295 (KGGGYKTMKKRKVKDEKG).

This sequence belongs to the LAZY family. In terms of tissue distribution, expressed specifically in the cells at the inner side of the vascular bundles of young leaf sheaths and peripheral cylinders of vascular bundles in the unelongated stems. Expressed in the leaf sheath pulvinus and the lamina joint.

It is found in the cell membrane. It localises to the nucleus. Functionally, involved in the regulation of shoot gravitropism and tiller angle through negative regulation of basipetal polar auxin transport (PAT). Acts as positive regulator of lateral auxin transport. Promotes vertical shoot growth. LAZY1 and TAC1 play opposite functions in the regulation of tiller growth angle. This is Protein LAZY 1 from Oryza sativa subsp. japonica (Rice).